Here is a 462-residue protein sequence, read N- to C-terminus: Steroidogenic factor 1 (462 aa).

Positions Asp10–Ala85 form a DNA-binding region, nuclear receptor. The NR C4-type zinc finger occupies Cys13–Cys33. 3 positions are modified to N6-acetyllysine: Lys34, Lys38, and Lys72. An NR C4-type zinc finger spans residues Cys49–Cys73. The interval Gly117–Pro149 is disordered. A Glycyl lysine isopeptide (Lys-Gly) (interchain with G-Cter in SUMO) cross-link involves residue Lys119. Residues Met126 to Met139 show a composition bias toward pro residues. A Glycyl lysine isopeptide (Lys-Gly) (interchain with G-Cter in SUMO) cross-link involves residue Lys194. Ser203 carries the post-translational modification Phosphoserine; by CDK7. One can recognise an NR LBD domain in the interval Asn223 to Lys460. 3 residues coordinate a 1,2-diacyl-sn-glycero-3-phosphocholine: Gly342, Tyr437, and Lys441.

Belongs to the nuclear hormone receptor family. NR5 subfamily. In terms of assembly, binds DNA as a monomer. Part of a complex consisting of SFPQ, NONO and NR5A1. Interacts with NR0B2, NCOA2 and PPARGC1A. Interacts with DGKQ and CDK7. Binds to and activated by HIPK3. Acetylation stimulates the transcriptional activity. In terms of processing, sumoylation reduces CDK7-mediated phosphorylation on Ser-203. Post-translationally, phosphorylated on Ser-203 by CDK7. This phosphorylation promotes transcriptional activity.

Its subcellular location is the nucleus. Functionally, transcriptional activator. Seems to be essential for sexual differentiation and formation of the primary steroidogenic tissues. Binds to the Ad4 site found in the promoter region of steroidogenic P450 genes such as CYP11A, CYP11B and CYP21B. Also regulates the AMH/Muellerian inhibiting substance gene as well as the AHCH and STAR genes. 5'-YCAAGGYC-3' and 5'-RRAGGTCA-3' are the consensus sequences for the recognition by NR5A1. The SFPQ-NONO-NR5A1 complex binds to the CYP17 promoter and regulates basal and cAMP-dependent transcriptional activity. Binds phosphatidylcholine and phospholipids with a phosphatidylinositol (PI) headgroup, in particular PI(3,4)P2 and PI(3,4,5)P3. Activated by the phosphorylation of NR5A1 by HIPK3 leading to increased steroidogenic gene expression upon cAMP signaling pathway stimulation. This chain is Steroidogenic factor 1 (Nr5a1), found in Rattus norvegicus (Rat).